The chain runs to 576 residues: Proline--tRNA ligase (576 aa).

Belongs to the class-II aminoacyl-tRNA synthetase family. ProS type 1 subfamily. Homodimer.

Its subcellular location is the cytoplasm. It carries out the reaction tRNA(Pro) + L-proline + ATP = L-prolyl-tRNA(Pro) + AMP + diphosphate. In terms of biological role, catalyzes the attachment of proline to tRNA(Pro) in a two-step reaction: proline is first activated by ATP to form Pro-AMP and then transferred to the acceptor end of tRNA(Pro). As ProRS can inadvertently accommodate and process non-cognate amino acids such as alanine and cysteine, to avoid such errors it has two additional distinct editing activities against alanine. One activity is designated as 'pretransfer' editing and involves the tRNA(Pro)-independent hydrolysis of activated Ala-AMP. The other activity is designated 'posttransfer' editing and involves deacylation of mischarged Ala-tRNA(Pro). The misacylated Cys-tRNA(Pro) is not edited by ProRS. This Finegoldia magna (strain ATCC 29328 / DSM 20472 / WAL 2508) (Peptostreptococcus magnus) protein is Proline--tRNA ligase.